The following is a 100-amino-acid chain: Phosphoribosyl-ATP pyrophosphatase (100 aa).

Belongs to the PRA-PH family.

Its subcellular location is the cytoplasm. It catalyses the reaction 1-(5-phospho-beta-D-ribosyl)-ATP + H2O = 1-(5-phospho-beta-D-ribosyl)-5'-AMP + diphosphate + H(+). Its pathway is amino-acid biosynthesis; L-histidine biosynthesis; L-histidine from 5-phospho-alpha-D-ribose 1-diphosphate: step 2/9. The protein is Phosphoribosyl-ATP pyrophosphatase of Haloquadratum walsbyi (strain DSM 16790 / HBSQ001).